A 188-amino-acid chain; its full sequence is dCTP deaminase (188 aa).

A dCTP-binding site is contributed by 107–112 (KSTYAR). Residue Glu-133 is the Proton donor/acceptor of the active site. Gln-152, Tyr-166, and Gln-176 together coordinate dCTP.

Belongs to the dCTP deaminase family. In terms of assembly, homotrimer.

The catalysed reaction is dCTP + H2O + H(+) = dUTP + NH4(+). It participates in pyrimidine metabolism; dUMP biosynthesis; dUMP from dCTP (dUTP route): step 1/2. Its function is as follows. Catalyzes the deamination of dCTP to dUTP. In Sulfurovum sp. (strain NBC37-1), this protein is dCTP deaminase.